Reading from the N-terminus, the 353-residue chain is S-adenosylmethionine:tRNA ribosyltransferase-isomerase (353 aa).

The protein belongs to the QueA family. In terms of assembly, monomer.

It localises to the cytoplasm. The enzyme catalyses 7-aminomethyl-7-carbaguanosine(34) in tRNA + S-adenosyl-L-methionine = epoxyqueuosine(34) in tRNA + adenine + L-methionine + 2 H(+). Its pathway is tRNA modification; tRNA-queuosine biosynthesis. Transfers and isomerizes the ribose moiety from AdoMet to the 7-aminomethyl group of 7-deazaguanine (preQ1-tRNA) to give epoxyqueuosine (oQ-tRNA). This Sodalis glossinidius (strain morsitans) protein is S-adenosylmethionine:tRNA ribosyltransferase-isomerase.